Consider the following 435-residue polypeptide: E3 ubiquitin-protein ligase itt1 (435 aa).

Positions 16-135 (DELIALQSIY…EHVRSIATIA (120 aa)) constitute an RWD domain. The TRIAD supradomain stretch occupies residues 170 to 420 (RKFQCNVCFD…DPVSSCYGML (251 aa)). Zn(2+)-binding residues include C174, C177, C192, H194, C197, C200, C219, C224, C266, C271, C286, C289, C294, C297, H302, C308, C368, and C371. The segment at 174-224 (CNVCFDEFNGTDCFQLTRCGHVSCQSCLRDYYTMCIQEGMFSQIKCIDLDC) adopts an RING-type 1 zinc-finger fold. An IBR-type zinc finger spans residues 245 to 308 (TNRYKELEEK…ATWHGDLSPC (64 aa)). The RING-type 2; atypical zinc finger occupies 368-396 (CPTCDRVVERIDGCCHMNCLCGTHFCFLC). C381 is an active-site residue. Zn(2+) is bound by residues C386, C388, C393, C396, H408, and C416.

The protein belongs to the RBR family. RNF14 subfamily.

The protein resides in the cytoplasm. Its subcellular location is the nucleus. It carries out the reaction [E2 ubiquitin-conjugating enzyme]-S-ubiquitinyl-L-cysteine + [acceptor protein]-L-lysine = [E2 ubiquitin-conjugating enzyme]-L-cysteine + [acceptor protein]-N(6)-ubiquitinyl-L-lysine.. It functions in the pathway protein modification; protein ubiquitination. Its function is as follows. E3 ubiquitin-protein ligase involved in the rescue of stalled ribosomes by promoting ubiquitination and degradation of proteins on stalled ribosomes. Specifically required to resolve RNA-protein cross-links caused by reactive aldehydes, which trigger translation stress by stalling ribosomes: acts by catalying 'Lys-6'-linked ubiquitination of RNA-protein cross-links, leading to their degradation. This is E3 ubiquitin-protein ligase itt1 (itt1) from Schizosaccharomyces pombe (strain 972 / ATCC 24843) (Fission yeast).